The primary structure comprises 478 residues: Ribulose bisphosphate carboxylase large chain (478 aa).

Residues 1–2 (MS) constitute a propeptide that is removed on maturation. Position 3 is an N-acetylproline (proline 3). At lysine 14 the chain carries N6,N6,N6-trimethyllysine. Asparagine 123 and threonine 173 together coordinate substrate. Residue lysine 175 is the Proton acceptor of the active site. Lysine 177 lines the substrate pocket. Residues lysine 201, aspartate 203, and glutamate 204 each contribute to the Mg(2+) site. Lysine 201 is modified (N6-carboxylysine). The active-site Proton acceptor is histidine 294. Substrate contacts are provided by arginine 295, histidine 327, and serine 379.

This sequence belongs to the RuBisCO large chain family. Type I subfamily. As to quaternary structure, heterohexadecamer of 8 large chains and 8 small chains; disulfide-linked. The disulfide link is formed within the large subunit homodimers. Mg(2+) serves as cofactor. In terms of processing, the disulfide bond which can form in the large chain dimeric partners within the hexadecamer appears to be associated with oxidative stress and protein turnover.

The protein localises to the plastid. The protein resides in the chloroplast. The enzyme catalyses 2 (2R)-3-phosphoglycerate + 2 H(+) = D-ribulose 1,5-bisphosphate + CO2 + H2O. It catalyses the reaction D-ribulose 1,5-bisphosphate + O2 = 2-phosphoglycolate + (2R)-3-phosphoglycerate + 2 H(+). Functionally, ruBisCO catalyzes two reactions: the carboxylation of D-ribulose 1,5-bisphosphate, the primary event in carbon dioxide fixation, as well as the oxidative fragmentation of the pentose substrate in the photorespiration process. Both reactions occur simultaneously and in competition at the same active site. This chain is Ribulose bisphosphate carboxylase large chain, found in Neurachne munroi.